A 529-amino-acid polypeptide reads, in one-letter code: Cytochrome P450 monooxygenase atmQ (529 aa).

2 consecutive transmembrane segments (helical) span residues 22 to 42 (YPFA…QQLA) and 51 to 71 (SWVN…IAAF). Residue cysteine 467 coordinates heme.

It belongs to the cytochrome P450 family. Heme serves as cofactor.

Its subcellular location is the membrane. Its pathway is secondary metabolite biosynthesis. Cytochrome P450 monooxygenase; part of the ATM2 gene cluster that mediates the biosynthesis of aflatrem, a tremorgenic mycotoxin with acute neurotoxic effects. Synthesis of geranylgeranyl diphosphate (GGPP) by AtmG (a GGPP synthase) precedes condensation of GGPP with indole 3-glycerol phosphate, followed by epoxidation and cyclization by AtmM (a FAD-dependent monooxygenase) and AtmC (a prenyltransferase) to produce paspaline. AtmB is also essential for paspaline production, but its exact role has not been identified yet. AtmP, a cytochrome P450 monooxygenase, subsequently converts paspaline to 13-desoxypaxilline via PC-M6 by removal of the C-30 methyl group and oxidation at C-10. AtmQ, a cytochrome P450 monooxygenase, then catalyzes the oxidation of 13-desoxypaxilline, first at C-7 to produce paspalicine and then at C-13 to form paspalinine. Finally, AtmD prenylates paspalinine to form aflatrem. The polypeptide is Cytochrome P450 monooxygenase atmQ (Aspergillus flavus).